The primary structure comprises 239 residues: Phosducin-like protein 3 (239 aa).

Positions 16–37 (KKGILPPKETPVEEEEDEQLHL) are disordered. Positions 28-201 (EEEEDEQLHL…LEWRLSESGA (174 aa)) constitute a Phosducin domain. Ser41 carries the phosphoserine modification. The segment at 89–239 (FGELKEISGQ…RDGEEDSDED (151 aa)) is thioredoxin fold. The span at 217–227 (QLMTSIRCSAN) shows a compositional bias: polar residues. Residues 217-239 (QLMTSIRCSANTHRDGEEDSDED) form a disordered region.

This sequence belongs to the phosducin family. As to quaternary structure, interacts (via thioredoxin fold region) with kdr/vegfr2 (via juxtamembrane domain). As to expression, expressed in endothelial cells.

It localises to the cytoplasm. The protein resides in the perinuclear region. It is found in the endoplasmic reticulum. In terms of biological role, acts as a chaperone for the angiogenic VEGF receptor KDR/VEGFR2, increasing its abundance by inhibiting its ubiquitination and degradation. Inhibits the folding activity of the chaperonin-containing T-complex (CCT) which leads to inhibition of cytoskeletal actin folding. Acts as a chaperone during heat shock alongside HSP90 and HSP40/70 chaperone complexes. Modulates the activation of caspases during apoptosis. In Danio rerio (Zebrafish), this protein is Phosducin-like protein 3.